A 326-amino-acid chain; its full sequence is Interleukin-1-binding protein (326 aa).

Residues 1–18 (MSIPPVIFLPIFFYSSFV) form the signal peptide. 3 Ig-like C2-type domains span residues 24 to 115 (PECI…LNLT), 122 to 208 (SNID…YDVT), and 221 to 322 (PPTM…KTVT). Cysteines 48 and 99 form a disulfide. N-linked (GlcNAc...) asparagine; by host glycans are attached at residues N80, N103, and N113. A disulfide bond links C143 and C194. N-linked (GlcNAc...) asparagine; by host glycosylation occurs at N237. Cysteines 242 and 309 form a disulfide.

This sequence belongs to the interleukin-1 receptor family. In terms of assembly, interacts with mouse Il1b.

The protein resides in the secreted. In terms of biological role, may reduce the host inflammatory response by interacting with inteleukin-1 beta (Il1b) and thus decreasing the association between IL1B and its cellular receptor. The protein is Interleukin-1-binding protein (OPG201) of Bos taurus (Bovine).